The following is a 195-amino-acid chain: Thymidylate kinase (195 aa).

Position 7-14 (7-14) interacts with ATP; that stretch reads GIDGVGKS.

Belongs to the thymidylate kinase family.

The enzyme catalyses dTMP + ATP = dTDP + ADP. Functionally, phosphorylation of dTMP to form dTDP in both de novo and salvage pathways of dTTP synthesis. The chain is Thymidylate kinase from Campylobacter concisus (strain 13826).